We begin with the raw amino-acid sequence, 137 residues long: Urease subunit beta (137 aa).

The interval I118–R137 is disordered. The segment covering S126–R137 has biased composition (polar residues).

This sequence belongs to the urease beta subunit family. Heterotrimer of UreA (gamma), UreB (beta) and UreC (alpha) subunits. Three heterotrimers associate to form the active enzyme.

It is found in the cytoplasm. It carries out the reaction urea + 2 H2O + H(+) = hydrogencarbonate + 2 NH4(+). It functions in the pathway nitrogen metabolism; urea degradation; CO(2) and NH(3) from urea (urease route): step 1/1. This chain is Urease subunit beta, found in Staphylococcus xylosus.